We begin with the raw amino-acid sequence, 592 residues long: Aspartate--tRNA(Asp/Asn) ligase (592 aa).

L-aspartate is bound at residue Glu175. An aspartate region spans residues 199 to 202; sequence QLFK. Residue Arg221 coordinates L-aspartate. ATP contacts are provided by residues 221-223 and Gln230; that span reads RDE. His450 contributes to the L-aspartate binding site. Glu483 contacts ATP. Arg490 serves as a coordination point for L-aspartate. 535–538 provides a ligand contact to ATP; sequence GLDR.

Belongs to the class-II aminoacyl-tRNA synthetase family. Type 1 subfamily. In terms of assembly, homodimer.

The protein localises to the cytoplasm. It catalyses the reaction tRNA(Asx) + L-aspartate + ATP = L-aspartyl-tRNA(Asx) + AMP + diphosphate. Its function is as follows. Aspartyl-tRNA synthetase with relaxed tRNA specificity since it is able to aspartylate not only its cognate tRNA(Asp) but also tRNA(Asn). Reaction proceeds in two steps: L-aspartate is first activated by ATP to form Asp-AMP and then transferred to the acceptor end of tRNA(Asp/Asn). This Acinetobacter baumannii (strain AB307-0294) protein is Aspartate--tRNA(Asp/Asn) ligase.